The chain runs to 466 residues: Rhodanese-like domain-containing protein 4, chloroplastic (466 aa).

The N-terminal 15 residues, 1–15, are a transit peptide targeting the chloroplast; that stretch reads MEALKTATFSPMSVL. A disordered region spans residues 1-35; the sequence is MEALKTATFSPMSVLSEKRSEPRKPFSLPNLFPPK. A thylakoid-targeting transit peptide spans 16 to 69; sequence SEKRSEPRKPFSLPNLFPPKSQRPISQESFLKRFNGGLALLTSVLSSATAPAKS. The chain crosses the membrane as a helical span at residues 103–123; sequence PLVIAGGVAALAVPFVLSQVL. One can recognise a Rhodanese domain in the interval 144-250; sequence TDDNAQLLDI…WLNSSLPWIE (107 aa). Residues 277–297 traverse the membrane as a helical segment; sequence VSVALGVAAAAGLSVFAFTEI. A compositionally biased stretch (low complexity) spans 373 to 384; sequence EAESATATTTTV. Disordered regions lie at residues 373–392 and 426–466; these read EAES…PEPE and AQVI…PSQP. Residues 455–466 show a composition bias toward pro residues; the sequence is LKPPSSPMPSQP.

In terms of assembly, component of high molecular weight thylakoid LFNRs-containing protein complexes containing LIR1, LFNR1, LFNR2, TIC62 and TROL proteins. As to expression, expressed in leaves and stems, and at lower levels in flowers and siliques (at protein level).

It localises to the plastid. The protein localises to the chloroplast envelope. The protein resides in the chloroplast thylakoid membrane. Functionally, rhodanese domain-containing protein required for anchoring ferredoxin--NADP reductase to the thylakoid membranes and sustaining efficient linear electron flow (LEF). This chain is Rhodanese-like domain-containing protein 4, chloroplastic, found in Arabidopsis thaliana (Mouse-ear cress).